Reading from the N-terminus, the 127-residue chain is Competence protein ComGF (127 aa).

The transformation pili are flexible filaments, consisting mainly of the major pilin ComGC and smaller amounts of the minor pilins, including at least ComGD, ComGF and ComGG. Interacts with ComGD. Interacts with ComGG.

Its subcellular location is the cell membrane. The protein localises to the fimbrium. Its function is as follows. Required for formation of the type IV-like pilus (T4P) that plays a role in transformation. Involved in transformation. Transformation pili are dynamically extended and retracted, perhaps thereby promoting DNA uptake and transformation. Required for transformation and DNA binding. This is Competence protein ComGF (comGF) from Bacillus subtilis (strain 168).